The following is a 926-amino-acid chain: Protein Niban 1 (926 aa).

The N-myristoyl glycine moiety is linked to residue Gly-2. Ser-578, Ser-581, Ser-595, Ser-601, and Ser-640 each carry phosphoserine. 2 disordered regions span residues 604 to 699 (LPGA…VPGS) and 719 to 889 (VEND…EQVN). Polar residues predominate over residues 661–672 (VENTAGPLSSHL). Ser-699 carries the post-translational modification Phosphoserine. Positions 733-745 (NIKEEESKIHPEA) are enriched in basic and acidic residues. Ser-755 is subject to Phosphoserine. Residues 756–767 (CEEREVREKEAQ) are compositionally biased toward basic and acidic residues. Over residues 784–797 (GRGSTSQSTSGGLT) the composition is skewed to low complexity. The segment covering 840-854 (VTVTPQEDATLSSNP) has biased composition (polar residues). Ser-923 carries the post-translational modification Phosphoserine.

The protein belongs to the Niban family.

Its subcellular location is the cytoplasm. It is found in the membrane. Functionally, regulates phosphorylation of a number of proteins involved in translation regulation including EIF2A, EIF4EBP1 and RPS6KB1. May be involved in the endoplasmic reticulum stress response. The polypeptide is Protein Niban 1 (Mus musculus (Mouse)).